The primary structure comprises 151 residues: Glycosylation-dependent cell adhesion molecule 1 (151 aa).

An N-terminal signal peptide occupies residues 1 to 19; sequence MKFFTVLLFVSLAATSLAL. Positions 29-123 are disordered; that stretch reads MKTQPTDAIP…ENLTKSSQTV (95 aa). Positions 42–52 are enriched in low complexity; it reads STPTSYTSEES. Over residues 53 to 71 the composition is skewed to basic and acidic residues; it reads TSSKDLSKEPSIFREELIS. Phosphoserine is present on residues Ser-54, Ser-59, Ser-63, and Ser-71. Low complexity predominate over residues 103–114; that stretch reads RPTTSAATTSEE. N-linked (GlcNAc...) asparagine glycosylation is present at Asn-115.

This sequence belongs to the PP3/GlyCAM-1 family. In terms of processing, extensively O-glycosylated. As to expression, lymph nodes. Associated with the lumenal surface of the high endothelial venules of peripheral lymph nodes.

It localises to the cell membrane. Adhesion molecule that accomplishes cell binding by presenting carbohydrate(s) to the lectin domain of L-selectin. The chain is Glycosylation-dependent cell adhesion molecule 1 (Glycam1) from Mus musculus (Mouse).